Consider the following 577-residue polypeptide: DEAD-box ATP-dependent RNA helicase 22 (577 aa).

The Q motif motif lies at 82–110 (TSWESLGVSDRLASALHGAGLARPSLVQA). A Helicase ATP-binding domain is found at 113-375 (IPHVLTTNDV…GGVLKRMFPN (263 aa)). Residue 126–133 (AETGSGKT) participates in ATP binding. The DEAD box motif lies at 249–252 (DEAD). The tract at residues 288–317 (SLGDTNEYREDSDSQSAELSADDEENEDGL) is disordered. The Helicase C-terminal domain maps to 407-568 (LLDAVKYGLK…SFRNKLKKQA (162 aa)).

The protein belongs to the DEAD box helicase family.

The enzyme catalyses ATP + H2O = ADP + phosphate + H(+). The chain is DEAD-box ATP-dependent RNA helicase 22 from Oryza sativa subsp. japonica (Rice).